The sequence spans 430 residues: UPF0597 protein Clos_2050 (430 aa).

It belongs to the UPF0597 family.

This chain is UPF0597 protein Clos_2050, found in Alkaliphilus oremlandii (strain OhILAs) (Clostridium oremlandii (strain OhILAs)).